Reading from the N-terminus, the 244-residue chain is Ribosomal RNA large subunit methyltransferase E (244 aa).

Residues glycine 81, tryptophan 83, aspartate 109, aspartate 125, and aspartate 149 each coordinate S-adenosyl-L-methionine. The active-site Proton acceptor is lysine 189.

The protein belongs to the class I-like SAM-binding methyltransferase superfamily. RNA methyltransferase RlmE family.

Its subcellular location is the cytoplasm. The enzyme catalyses uridine(2552) in 23S rRNA + S-adenosyl-L-methionine = 2'-O-methyluridine(2552) in 23S rRNA + S-adenosyl-L-homocysteine + H(+). Specifically methylates the uridine in position 2552 of 23S rRNA at the 2'-O position of the ribose in the fully assembled 50S ribosomal subunit. This is Ribosomal RNA large subunit methyltransferase E from Cereibacter sphaeroides (strain ATCC 17029 / ATH 2.4.9) (Rhodobacter sphaeroides).